The following is a 531-amino-acid chain: NADH-quinone oxidoreductase subunit N (531 aa).

14 helical membrane passes run 8–28 (VEYF…AGVL), 41–61 (AQVT…IVVA), 81–101 (ATLF…VFMA), 146–166 (GATQ…MMVF), 172–192 (LLTM…MCGL), 208–228 (FLLG…LYGA), 250–270 (ALAG…AVPF), 282–302 (PTPI…GALL), 318–338 (PVLW…AVNQ), 350–370 (VAHV…GLSA), 372–392 (LFYL…VGLV), 418–438 (IVGV…LTSG), 453–473 (GAVP…YFYV), and 500–520 (AAIA…QPVL).

It belongs to the complex I subunit 2 family. As to quaternary structure, NDH-1 is composed of 14 different subunits. Subunits NuoA, H, J, K, L, M, N constitute the membrane sector of the complex.

The protein localises to the cell membrane. It carries out the reaction a quinone + NADH + 5 H(+)(in) = a quinol + NAD(+) + 4 H(+)(out). Functionally, NDH-1 shuttles electrons from NADH, via FMN and iron-sulfur (Fe-S) centers, to quinones in the respiratory chain. The immediate electron acceptor for the enzyme in this species is believed to be a menaquinone. Couples the redox reaction to proton translocation (for every two electrons transferred, four hydrogen ions are translocated across the cytoplasmic membrane), and thus conserves the redox energy in a proton gradient. The protein is NADH-quinone oxidoreductase subunit N of Mycobacterium bovis (strain ATCC BAA-935 / AF2122/97).